The following is a 137-amino-acid chain: 6,7-dimethyl-8-ribityllumazine synthase (137 aa).

5-amino-6-(D-ribitylamino)uracil is bound by residues Phe-11, Ser-43–Asp-45, and Cys-67–Ile-69. Asp-72–Thr-73 contacts (2S)-2-hydroxy-3-oxobutyl phosphate. His-75 (proton donor) is an active-site residue. Leu-100 contributes to the 5-amino-6-(D-ribitylamino)uracil binding site. Arg-115 lines the (2S)-2-hydroxy-3-oxobutyl phosphate pocket.

It belongs to the DMRL synthase family. In terms of assembly, forms an icosahedral capsid composed of 60 subunits, arranged as a dodecamer of pentamers.

The enzyme catalyses (2S)-2-hydroxy-3-oxobutyl phosphate + 5-amino-6-(D-ribitylamino)uracil = 6,7-dimethyl-8-(1-D-ribityl)lumazine + phosphate + 2 H2O + H(+). The protein operates within cofactor biosynthesis; riboflavin biosynthesis; riboflavin from 2-hydroxy-3-oxobutyl phosphate and 5-amino-6-(D-ribitylamino)uracil: step 1/2. Its function is as follows. Catalyzes the formation of 6,7-dimethyl-8-ribityllumazine by condensation of 5-amino-6-(D-ribitylamino)uracil with 3,4-dihydroxy-2-butanone 4-phosphate. This is the penultimate step in the biosynthesis of riboflavin. This chain is 6,7-dimethyl-8-ribityllumazine synthase, found in Methanococcus maripaludis (strain C5 / ATCC BAA-1333).